The sequence spans 203 residues: Probable GTP-binding protein EngB (203 aa).

The EngB-type G domain maps to 24 to 199 (DGSEVAFAGR…HTVIETWLGL (176 aa)). GTP is bound by residues 32-39 (GRSNAGKS), 59-63 (GRTQQ), 77-80 (DLPG), 144-147 (TKAD), and 178-180 (FSS). Ser39 and Thr61 together coordinate Mg(2+).

It belongs to the TRAFAC class TrmE-Era-EngA-EngB-Septin-like GTPase superfamily. EngB GTPase family. Mg(2+) serves as cofactor.

Necessary for normal cell division and for the maintenance of normal septation. This Xylella fastidiosa (strain Temecula1 / ATCC 700964) protein is Probable GTP-binding protein EngB.